The primary structure comprises 391 residues: MVDFGALPPEINSARMYAGPGSASLVAAAQMWDSVASDLFSAASAFQSVVWGLTVGSWIGSSAGLMVAAASPYVAWMSVTAGQAELTAAQVRVAAAAYETAYGLTVPPPVIAENRAELMILIATNLLGQNTPAIAVNEAEYGEMWAQDAAAMFGYAAATATATATLLPFEEAPEMTSAGGLLEQAAAVEEASDTAAANQLMNNVPQALQQLAQPTQGTTPSSKLGGLWKTVSPHRSPISNMVSMANNHMSMTNSGVSMTNTLSSMLKGFAPAAAAQAVQTAAQNGVRAMSSLGSSLGSSGLGGGVAANLGRAASVGSLSVPQAWAAANQAVTPAARALPLTSLTSAAERGPGQMLGGLPVGQMGARAGGGLSGVLRVPPRPYVMPHSPAAG.

Belongs to the mycobacterial PPE family. Interacts with human TLR2.

Its subcellular location is the secreted. The protein resides in the cell wall. The protein localises to the cell surface. Could be a crucial virulence factor for intracellular survival of M.tuberculosis. Favors development of Th2-type response, and down-regulates the pro-inflammatory and Th1-type response. Specifically interacts with the human Toll-like receptor 2 (TLR2), leading to an early and sustained activation of p38 MAPK, which induces IL-10 production and activates Th2-type immune response. Also inhibits pro-inflammatory cytokines IL-12p40 and TNF-alpha production. Acts by up-regulating the expression as well as tyrosine phosphorylation of suppressor of cytokine signaling 3 (SOCS-3), leading to the inhibition of phosphorylation of I-kappa-B-alpha, thereby preventing nuclear translocation of the NF-kappa-B/REL subunits and expression of NF-kappa-B regulated genes like IL-12 and TNF-alpha. Induction of SOCS-3 probably depends on the activation of p38 MAPK. This is PPE family protein PPE18 from Mycobacterium tuberculosis (strain ATCC 25618 / H37Rv).